The primary structure comprises 648 residues: PAN2-PAN3 deadenylation complex subunit PAN3 (648 aa).

The interval 1–24 is disordered; that stretch reads MAATRYPPNDLRRQVGSPRSKGRE. A C3H1-type zinc finger spans residues 24-53; it reads ENKDTLCRNILIYGNCRYEDQGCTFNHDQN. The segment at 244–506 is pseudokinase domain; the sequence is QVMPNSGLPQ…SIENFISGIA (263 aa). ATP is bound by residues Arg-295, 345 to 352, and 404 to 405; these read DYHPLSKT and SK. Residues 507-545 adopt a coiled-coil conformation; it reads THMTAFFDLALQDGDEKQFHLARELENGRIARSMMKLMT. The tract at residues 546–648 is knob domain; the sequence is IIERAEPGGA…SKTGAPGANN (103 aa).

The protein belongs to the protein kinase superfamily. PAN3 family. Homodimer. Forms a heterotrimer with a catalytic subunit PAN2 to form the poly(A)-nuclease (PAN) deadenylation complex. Interacts (via PAM-2 motif) with poly(A)-binding protein PAB1 (via PABC domain), conferring substrate specificity of the enzyme complex.

It localises to the cytoplasm. In terms of biological role, regulatory subunit of the poly(A)-nuclease (PAN) deadenylation complex, one of two cytoplasmic mRNA deadenylases involved in mRNA turnover. PAN specifically shortens poly(A) tails of RNA and the activity is stimulated by poly(A)-binding protein PAB1. PAN deadenylation is followed by rapid degradation of the shortened mRNA tails by the CCR4-NOT complex. Deadenylated mRNAs are then degraded by two alternative mechanisms, namely exosome-mediated 3'-5' exonucleolytic degradation, or deadenylation-dependent mRNA decaping and subsequent 5'-3' exonucleolytic degradation by XRN1. May also be involved in post-transcriptional maturation of mRNA poly(A) tails. PAN3 acts as a positive regulator for PAN activity, recruiting the catalytic subunit PAN2 to mRNA via its interaction with RNA and with PAB1. This Chaetomium globosum (strain ATCC 6205 / CBS 148.51 / DSM 1962 / NBRC 6347 / NRRL 1970) (Soil fungus) protein is PAN2-PAN3 deadenylation complex subunit PAN3.